Here is a 223-residue protein sequence, read N- to C-terminus: Transcriptional regulator HMO1 (223 aa).

2 disordered regions span residues 69–89 (IEAT…APKK) and 165–223 (DGSA…HGSP). Residues 70–86 (EATESKKKRKQEKDPNA) are compositionally biased toward basic and acidic residues. The HMG box DNA-binding region spans 87 to 160 (PKKPLTMFFQ…IYNIEKKKYE (74 aa)). Residues 204–223 (KKKKKTEKKEKKKKSGHGSP) show a composition bias toward basic residues.

It is found in the nucleus. Functionally, transcription factor that binds upstream of hexose and ergosterol metabolism, as well as cell cycle genes. Activates pseudohyphal growth. In Candida albicans (strain SC5314 / ATCC MYA-2876) (Yeast), this protein is Transcriptional regulator HMO1 (HMO1).